Reading from the N-terminus, the 353-residue chain is Quinolinate synthase (353 aa).

Iminosuccinate contacts are provided by His49 and Ser70. Cys115 contributes to the [4Fe-4S] cluster binding site. Residues 141–143 (YAN) and Ser158 contribute to the iminosuccinate site. Cys202 serves as a coordination point for [4Fe-4S] cluster. Iminosuccinate contacts are provided by residues 228–230 (HPE) and Thr245. Cys299 lines the [4Fe-4S] cluster pocket.

This sequence belongs to the quinolinate synthase family. Type 1 subfamily. The cofactor is [4Fe-4S] cluster.

The protein localises to the cytoplasm. It catalyses the reaction iminosuccinate + dihydroxyacetone phosphate = quinolinate + phosphate + 2 H2O + H(+). The protein operates within cofactor biosynthesis; NAD(+) biosynthesis; quinolinate from iminoaspartate: step 1/1. In terms of biological role, catalyzes the condensation of iminoaspartate with dihydroxyacetone phosphate to form quinolinate. The protein is Quinolinate synthase of Marinobacter nauticus (strain ATCC 700491 / DSM 11845 / VT8) (Marinobacter aquaeolei).